We begin with the raw amino-acid sequence, 204 residues long: Small ribosomal subunit protein uS4 (204 aa).

The region spanning 93–156 (SRLSSVLYHS…AKIPVVVEAE (64 aa)) is the S4 RNA-binding domain.

It belongs to the universal ribosomal protein uS4 family. In terms of assembly, part of the 30S ribosomal subunit. Contacts protein S5. The interaction surface between S4 and S5 is involved in control of translational fidelity.

Functionally, one of the primary rRNA binding proteins, it binds directly to 16S rRNA where it nucleates assembly of the body of the 30S subunit. Its function is as follows. With S5 and S12 plays an important role in translational accuracy. This chain is Small ribosomal subunit protein uS4, found in Wolbachia pipientis wMel.